Reading from the N-terminus, the 441-residue chain is Keratin, type I cytoskeletal 17 (441 aa).

The disordered stretch occupies residues 1-23; that stretch reads MTTTIRHFSSGSIKGSSGLAGGS. Positions 1-91 are head; it reads MTTTIRHFSS…GGVDGLLVGG (91 aa). Low complexity predominate over residues 9–23; that stretch reads SSGSIKGSSGLAGGS. At Ser12 the chain carries Phosphoserine. Lys14 is covalently cross-linked (Glycyl lysine isopeptide (Lys-Gly) (interchain with G-Cter in SUMO1); alternate). Lys14 is covalently cross-linked (Glycyl lysine isopeptide (Lys-Gly) (interchain with G-Cter in SUMO2); alternate). A phosphoserine mark is found at Ser24, Ser30, Ser32, and Ser37. Ser42 carries the post-translational modification Phosphoserine; by RPS6KA1. The segment at 92–128 is coil 1A; that stretch reads EKATMQNLNDRLASYLDKVRALEEANTELELKIRDWY. An IF rod domain is found at 92 to 403; sequence EKATMQNLND…RLLEGEDAHL (312 aa). Phosphothreonine is present on Thr118. Residues 129–146 form a linker 1 region; that stretch reads QKQAPGPAPDYSSYFKTI. Residues 147-238 are coil 1B; sequence EDLRNKIHTA…NHEEEMKALR (92 aa). The linker 12 stretch occupies residues 239-258; sequence GQVGGEINVEMDAAPGVDLS. A coil 2 region spans residues 259–400; sequence RILNEMRDQY…TYRRLLEGED (142 aa). A Glycyl lysine isopeptide (Lys-Gly) (interchain with G-Cter in SUMO2) cross-link involves residue Lys286. Thr287 is subject to Phosphothreonine. Ser331 carries the phosphoserine modification. The segment at 401–441 is tail; the sequence is AHLTQYKTKEPVTTRQVRTIVEEVQDGRVISSREQVHQTSH. Glycyl lysine isopeptide (Lys-Gly) (interchain with G-Cter in SUMO1); alternate cross-links involve residues Lys407 and Lys409. Glycyl lysine isopeptide (Lys-Gly) (interchain with G-Cter in SUMO2); alternate cross-links involve residues Lys407 and Lys409.

Belongs to the intermediate filament family. Heterodimer of a type I and a type II keratin. KRT17 associates with KRT6 isomers (KRT6A or KRT6B). Interacts with TRADD and SFN. Post-translationally, phosphorylation at Ser-42 occurs in a growth- and stress-dependent fashion in skin keratinocytes, it has no effect on filament organization.

Its subcellular location is the cytoplasm. Functionally, type I keratin involved in the formation and maintenance of various skin appendages, specifically in determining shape and orientation of hair. Required for the correct growth of hair follicles, in particular for the persistence of the anagen (growth) state. Modulates the function of TNF-alpha in the specific context of hair cycling. Regulates protein synthesis and epithelial cell growth through binding to the adapter protein SFN and by stimulating Akt/mTOR pathway. Involved in tissue repair. May be a marker of basal cell differentiation in complex epithelia and therefore indicative of a certain type of epithelial 'stem cells'. Acts as a promoter of epithelial proliferation by acting a regulator of immune response in skin: promotes Th1/Th17-dominated immune environment contributing to the development of basaloid skin tumors. May act as an autoantigen in the immunopathogenesis of psoriasis, with certain peptide regions being a major target for autoreactive T-cells and hence causing their proliferation. The chain is Keratin, type I cytoskeletal 17 from Bos taurus (Bovine).